Here is a 382-residue protein sequence, read N- to C-terminus: Proton extrusion protein PxcA (382 aa).

4 helical membrane-spanning segments follow: residues 156 to 176 (TLISLKIILLLILVPLLVQQI), 257 to 277 (AIKNVLADLAALIAFAFVCII), 305 to 325 (IILFTDMFVGFHSPEGWQVLL), and 340 to 360 (FILLFIATFPVILATIFKYWI).

This sequence belongs to the CemA family.

The protein resides in the cell inner membrane. Required for H(+) efflux immediately after light irradiation to form a rapid H(+) concentration gradient across the thylakoid membranes. Together with PxcL, contributes to transient H(+) uptake following dark to light transition. The sequence is that of Proton extrusion protein PxcA from Prochlorococcus marinus (strain MIT 9313).